Reading from the N-terminus, the 200-residue chain is Large ribosomal subunit protein uL4 (200 aa).

The disordered stretch occupies residues 43 to 70 (RAQKTRAEVSGSGKKPWRQKGTGRARSG).

This sequence belongs to the universal ribosomal protein uL4 family. As to quaternary structure, part of the 50S ribosomal subunit.

One of the primary rRNA binding proteins, this protein initially binds near the 5'-end of the 23S rRNA. It is important during the early stages of 50S assembly. It makes multiple contacts with different domains of the 23S rRNA in the assembled 50S subunit and ribosome. Its function is as follows. Forms part of the polypeptide exit tunnel. This chain is Large ribosomal subunit protein uL4, found in Glaesserella parasuis serovar 5 (strain SH0165) (Haemophilus parasuis).